The chain runs to 335 residues: MKMEESAAHFFEGTEKLLELWFSQQDASKGSGDLRDIPRFEWDKLLENVHCLIISVTKTDKQEAYVLSESSMFVSKRRFILKTCGTTLLLQALVPLLELAREYCGFDGIQNFFYSRKNFMKPNHQEYPHRNFHEEVEFLNQIFPNGAAYCMGRINSDCWYLYTLDIPDEYVISQPDQTLEILMSELDPEVMDQFYMKEGVTANDVTRVSGIRDLITGSVIDATMFSPCGYSMNGMKSDGTYWTIHITPEPDFSYVSFETNVSLTTYDDLISKVVDVFKPRKFVTTLFVNQSSKCRTTFSCAQKIEGFRRVDRQFAQFNDYNFVFTSFAKIQPQQS.

Active-site residues include E12 and E15. The active-site Schiff-base intermediate with substrate; via pyruvic acid is the S70. The residue at position 70 (S70) is a Pyruvic acid (Ser); by autocatalysis. C84 serves as the catalytic Proton donor; for catalytic activity. Catalysis depends on proton acceptor; for processing activity residues S231 and H245.

It belongs to the eukaryotic AdoMetDC family. It depends on pyruvate as a cofactor. Post-translationally, is synthesized initially as an inactive proenzyme. Formation of the active enzyme involves a self-maturation process in which the active site pyruvoyl group is generated from an internal serine residue via an autocatalytic post-translational modification. Two non-identical subunits are generated from the proenzyme in this reaction, and the pyruvate is formed at the N-terminus of the alpha chain, which is derived from the carboxyl end of the proenzyme. The post-translation cleavage follows an unusual pathway, termed non-hydrolytic serinolysis, in which the side chain hydroxyl group of the serine supplies its oxygen atom to form the C-terminus of the beta chain, while the remainder of the serine residue undergoes an oxidative deamination to produce ammonia and the pyruvoyl group blocking the N-terminus of the alpha chain.

It catalyses the reaction S-adenosyl-L-methionine + H(+) = S-adenosyl 3-(methylsulfanyl)propylamine + CO2. The protein operates within amine and polyamine biosynthesis; S-adenosylmethioninamine biosynthesis; S-adenosylmethioninamine from S-adenosyl-L-methionine: step 1/1. In terms of biological role, essential for biosynthesis of the polyamines spermidine and spermine. Promotes maintenance and self-renewal of embryonic stem cells, by maintaining spermine levels. The chain is S-adenosylmethionine decarboxylase proenzyme (amd1) from Xenopus laevis (African clawed frog).